The sequence spans 484 residues: uncharacterized protein (484 aa).

The region spanning 47–226 (TLPIPAAVVK…TEVTVKIFKF (180 aa)) is the FAD-binding PCMH-type domain.

It belongs to the FAD-binding oxidoreductase/transferase type 4 family.

This is an uncharacterized protein from Escherichia coli O157:H7.